The primary structure comprises 432 residues: Trigger factor (432 aa).

The 86-residue stretch at 161–246 (DDRVTIDFVG…LKKIENMVLP (86 aa)) folds into the PPIase FKBP-type domain.

The protein belongs to the FKBP-type PPIase family. Tig subfamily.

The protein resides in the cytoplasm. The enzyme catalyses [protein]-peptidylproline (omega=180) = [protein]-peptidylproline (omega=0). Functionally, involved in protein export. Acts as a chaperone by maintaining the newly synthesized protein in an open conformation. Functions as a peptidyl-prolyl cis-trans isomerase. The protein is Trigger factor of Haemophilus influenzae (strain 86-028NP).